Consider the following 145-residue polypeptide: Cystatin-like 1 (145 aa).

The signal sequence occupies residues 1 to 19 (MGIGCWRNPLLLLIALVLS). One can recognise a Cystatin domain in the interval 37–115 (SKKNMNSTLN…KKLRKSLICE (79 aa)). A glycan (N-linked (GlcNAc...) asparagine) is linked at Asn-42. Intrachain disulfides connect Cys-91/Cys-101 and Cys-114/Cys-134.

Belongs to the cystatin family.

The protein resides in the secreted. The sequence is that of Cystatin-like 1 (CSTL1) from Homo sapiens (Human).